A 316-amino-acid chain; its full sequence is Apolipoprotein E (316 aa).

The N-terminal stretch at 1–18 (MKVLWVALVITLLAGCQA) is a signal peptide. A run of 8 repeats spans residues 79–100 (VLMD…GQLG), 101–122 (PIAQ…ARLA), 123–144 (SDME…ALMG), 145–166 (QTTD…KRLL), 167–188 (RDAE…EGSE), 189–210 (RSVS…VRAA), 211–232 (TVGT…QKLR), and 233–254 (GRME…EQLE). The 8 X 22 AA approximate tandem repeats stretch occupies residues 79 to 254 (VLMDETMKEV…HLEEMREQLE (176 aa)). The tract at residues 157–167 (HLRKLRKRLLR) is LDL and other lipoprotein receptors binding. Heparin is bound at residue 161–164 (LRKR). A lipid-binding and lipoprotein association region spans residues 209-289 (AATVGTLASQ…SWFEPLVEDM (81 aa)). 228-235 (HQKLRGRM) serves as a coordination point for heparin. Residues 265–316 (SQMRLQAEAFQARLKSWFEPLVEDMQRQWAGLVEKVQLAMATGPTSAPIENN) form a homooligomerization region. Positions 277-289 (RLKSWFEPLVEDM) are specificity for association with VLDL.

The protein belongs to the apolipoprotein A1/A4/E family. Homotetramer. May interact with ABCA1; functionally associated with ABCA1 in the biogenesis of HDLs. May interact with APP/A4 amyloid-beta peptide; the interaction is extremely stable in vitro but its physiological significance is unclear. May interact with MAPT. May interact with MAP2. In the cerebrospinal fluid, interacts with secreted SORL1. Interacts with PMEL; this allows the loading of PMEL luminal fragment on ILVs to induce fibril nucleation. Post-translationally, APOE exists as multiple glycosylated and sialylated glycoforms within cells and in plasma. The extent of glycosylation and sialylation are tissue and context specific. In terms of processing, glycated in plasma VLDL. Phosphorylated by FAM20C in the extracellular medium.

The protein localises to the secreted. It is found in the extracellular space. Its subcellular location is the extracellular matrix. It localises to the extracellular vesicle. The protein resides in the endosome. The protein localises to the multivesicular body. Functionally, APOE is an apolipoprotein, a protein associating with lipid particles, that mainly functions in lipoprotein-mediated lipid transport between organs via the plasma and interstitial fluids. APOE is a core component of plasma lipoproteins and is involved in their production, conversion and clearance. Apolipoproteins are amphipathic molecules that interact both with lipids of the lipoprotein particle core and the aqueous environment of the plasma. As such, APOE associates with chylomicrons, chylomicron remnants, very low density lipoproteins (VLDL) and intermediate density lipoproteins (IDL) but shows a preferential binding to high-density lipoproteins (HDL). It also binds a wide range of cellular receptors including the LDL receptor/LDLR and the very low-density lipoprotein receptor/VLDLR that mediate the cellular uptake of the APOE-containing lipoprotein particles. Finally, APOE also has a heparin-binding activity and binds heparan-sulfate proteoglycans on the surface of cells, a property that supports the capture and the receptor-mediated uptake of APOE-containing lipoproteins by cells. The polypeptide is Apolipoprotein E (APOE) (Tursiops truncatus (Atlantic bottle-nosed dolphin)).